Consider the following 457-residue polypeptide: Glutamate--tRNA ligase 1 (457 aa).

The 'HIGH' region motif lies at 9-19 (PSPTGYIHIGN). A 'KMSKS' region motif is present at residues 250–254 (GLSKR). Lys-253 serves as a coordination point for ATP.

This sequence belongs to the class-I aminoacyl-tRNA synthetase family. Glutamate--tRNA ligase type 1 subfamily. Monomer.

It is found in the cytoplasm. The enzyme catalyses tRNA(Glu) + L-glutamate + ATP = L-glutamyl-tRNA(Glu) + AMP + diphosphate. Functionally, catalyzes the attachment of glutamate to tRNA(Glu) in a two-step reaction: glutamate is first activated by ATP to form Glu-AMP and then transferred to the acceptor end of tRNA(Glu). In Brucella canis (strain ATCC 23365 / NCTC 10854 / RM-666), this protein is Glutamate--tRNA ligase 1.